A 424-amino-acid chain; its full sequence is Serine hydroxymethyltransferase (424 aa).

Residues Leu-118 and 122-124 (GHL) each bind (6S)-5,6,7,8-tetrahydrofolate. Lys-227 is modified (N6-(pyridoxal phosphate)lysine). 351–353 (SPF) lines the (6S)-5,6,7,8-tetrahydrofolate pocket.

The protein belongs to the SHMT family. As to quaternary structure, homodimer. It depends on pyridoxal 5'-phosphate as a cofactor.

Its subcellular location is the cytoplasm. The catalysed reaction is (6R)-5,10-methylene-5,6,7,8-tetrahydrofolate + glycine + H2O = (6S)-5,6,7,8-tetrahydrofolate + L-serine. It functions in the pathway one-carbon metabolism; tetrahydrofolate interconversion. Its pathway is amino-acid biosynthesis; glycine biosynthesis; glycine from L-serine: step 1/1. Its function is as follows. Catalyzes the reversible interconversion of serine and glycine with tetrahydrofolate (THF) serving as the one-carbon carrier. This reaction serves as the major source of one-carbon groups required for the biosynthesis of purines, thymidylate, methionine, and other important biomolecules. Also exhibits THF-independent aldolase activity toward beta-hydroxyamino acids, producing glycine and aldehydes, via a retro-aldol mechanism. The sequence is that of Serine hydroxymethyltransferase from Thermosipho melanesiensis (strain DSM 12029 / CIP 104789 / BI429).